The primary structure comprises 412 residues: MNNLLDRFLNYVSFDTQSKPGVRQVPSTEGQFRLARALQSELLALGLEQVTLSEHGCVMATLPANVAWPVPTIGFIAHMDTAPDASGKNVNPQIVENYRGGDIALGIGDEILSPVMFPVLHQLLGQTLITTDGKTLLGADDKSGIAEIMTAMVRLKQGNTPHGEIRVAFTPDEEVGKGAQHFDVAAFGAEWAYTVDGGGVGELECENFNAASVNIKIIGNNVHPGSAKGVMVNALGLANRIHALLPAAEVPEQTDGYEGFYHLVSMKGSVEKAEMHYIVRDFSREGFEARKKHMMAIAKQVGQGLHPDCYIEVTLDDSYYNMRDEVAKHPHIVALARQAMCDLAIEPIERPIRGGTDGAQLSFHGLPCPNLFTGGYNFHGKHEFITLEGMEKAVSVIMRIAELTAGRARVAG.

Zn(2+) is bound at residue H78. D80 is an active-site residue. D140 contacts Zn(2+). Catalysis depends on E173, which acts as the Proton acceptor. Zn(2+)-binding residues include E174, D196, and H379.

The protein belongs to the peptidase M20B family. Zn(2+) is required as a cofactor.

It is found in the cytoplasm. The enzyme catalyses Release of the N-terminal residue from a tripeptide.. Its function is as follows. Cleaves the N-terminal amino acid of tripeptides. This is Peptidase T from Edwardsiella ictaluri (strain 93-146).